The primary structure comprises 202 residues: Putative 3-methyladenine DNA glycosylase (202 aa).

This sequence belongs to the DNA glycosylase MPG family.

The polypeptide is Putative 3-methyladenine DNA glycosylase (Staphylococcus aureus (strain bovine RF122 / ET3-1)).